Here is a 535-residue protein sequence, read N- to C-terminus: Light-independent protochlorophyllide reductase subunit B (535 aa).

Residue D36 coordinates [4Fe-4S] cluster. Residue D292 is the Proton donor of the active site. A substrate-binding site is contributed by 428 to 429 (GL).

Belongs to the ChlB/BchB/BchZ family. As to quaternary structure, protochlorophyllide reductase is composed of three subunits; BchL, BchN and BchB. Forms a heterotetramer of two BchB and two BchN subunits. [4Fe-4S] cluster is required as a cofactor.

The catalysed reaction is chlorophyllide a + oxidized 2[4Fe-4S]-[ferredoxin] + 2 ADP + 2 phosphate = protochlorophyllide a + reduced 2[4Fe-4S]-[ferredoxin] + 2 ATP + 2 H2O. It participates in porphyrin-containing compound metabolism; bacteriochlorophyll biosynthesis (light-independent). Functionally, component of the dark-operative protochlorophyllide reductase (DPOR) that uses Mg-ATP and reduced ferredoxin to reduce ring D of protochlorophyllide (Pchlide) to form chlorophyllide a (Chlide). This reaction is light-independent. The NB-protein (BchN-BchB) is the catalytic component of the complex. The protein is Light-independent protochlorophyllide reductase subunit B of Chlorobaculum parvum (strain DSM 263 / NCIMB 8327) (Chlorobium vibrioforme subsp. thiosulfatophilum).